A 197-amino-acid polypeptide reads, in one-letter code: Putative methyltransferase Mtx subunit A (197 aa).

The protein belongs to the MtrA family. In terms of assembly, may be part of a complex composed of 3 subunits; MtxA, MtxH and MtxX.

The sequence is that of Putative methyltransferase Mtx subunit A (mtxA) from Methanosarcina acetivorans (strain ATCC 35395 / DSM 2834 / JCM 12185 / C2A).